Reading from the N-terminus, the 180-residue chain is Oligoribonuclease (180 aa).

Positions 7–170 constitute an Exonuclease domain; sequence LIWIDLEMTG…DDIRESIAEL (164 aa). Residue Y128 is part of the active site.

It belongs to the oligoribonuclease family.

Its subcellular location is the cytoplasm. In terms of biological role, 3'-to-5' exoribonuclease specific for small oligoribonucleotides. The sequence is that of Oligoribonuclease from Pseudomonas aeruginosa (strain UCBPP-PA14).